Here is a 137-residue protein sequence, read N- to C-terminus: Large ribosomal subunit protein uL16 (137 aa).

It belongs to the universal ribosomal protein uL16 family. Part of the 50S ribosomal subunit.

Functionally, binds 23S rRNA and is also seen to make contacts with the A and possibly P site tRNAs. The chain is Large ribosomal subunit protein uL16 from Beijerinckia indica subsp. indica (strain ATCC 9039 / DSM 1715 / NCIMB 8712).